We begin with the raw amino-acid sequence, 521 residues long: Hyccin (521 aa).

Threonine 306 is modified (phosphothreonine). The residue at position 321 (serine 321) is a Phosphoserine. The span at 355 to 373 (AASSTSQSGLSNSSHNCSN) shows a compositional bias: low complexity. Residues 355-413 (AASSTSQSGLSNSSHNCSNKTSVGKNQRRSGGSKAGAKERETAGESCRDHFARKQTQRA) are disordered. The span at 390-406 (GAKERETAGESCRDHFA) shows a compositional bias: basic and acidic residues. Residues serine 415, serine 422, serine 433, serine 453, and serine 465 each carry the phosphoserine modification.

This sequence belongs to the Hyccin family. As to quaternary structure, component of a phosphatidylinositol 4-kinase (PI4K) complex, composed of PI4KA, EFR3 (EFR3A or EFR3B), TTC7 (TTC7A or TTC7B) and HYCC (HYCC1 or HYCC2). Interacts with TTC7 (TTC7A or TTC7B), interaction is direct. In terms of tissue distribution, predominantly expressed in the central nervous system, where it is found in neurons but not in myelinating cells. Lower abundance is observed in peripheral neurons, where it is detectable only at early postnatal ages. Expressed in both oligodendrocytes and neurons.

The protein resides in the cytoplasm. It localises to the cytosol. Its subcellular location is the cell membrane. Component of a complex required to localize phosphatidylinositol 4-kinase (PI4K) to the plasma membrane. The complex acts as a regulator of phosphatidylinositol 4-phosphate (PtdIns(4)P) synthesis. HYCC1 plays a key role in oligodendrocytes formation, a cell type with expanded plasma membrane that requires generation of PtdIns(4)P. Its role in oligodendrocytes formation probably explains its importance in myelination of the central and peripheral nervous system. May also have a role in the beta-catenin/Lef signaling pathway. The polypeptide is Hyccin (Hycc1) (Mus musculus (Mouse)).